The primary structure comprises 401 residues: Nicotinate phosphoribosyltransferase (401 aa).

The residue at position 221 (H221) is a Phosphohistidine; by autocatalysis.

This sequence belongs to the NAPRTase family. In terms of processing, transiently phosphorylated on a His residue during the reaction cycle. Phosphorylation strongly increases the affinity for substrates and increases the rate of nicotinate D-ribonucleotide production. Dephosphorylation regenerates the low-affinity form of the enzyme, leading to product release.

The enzyme catalyses nicotinate + 5-phospho-alpha-D-ribose 1-diphosphate + ATP + H2O = nicotinate beta-D-ribonucleotide + ADP + phosphate + diphosphate. The protein operates within cofactor biosynthesis; NAD(+) biosynthesis; nicotinate D-ribonucleotide from nicotinate: step 1/1. Catalyzes the synthesis of beta-nicotinate D-ribonucleotide from nicotinate and 5-phospho-D-ribose 1-phosphate at the expense of ATP. The sequence is that of Nicotinate phosphoribosyltransferase from Serratia proteamaculans (strain 568).